The sequence spans 349 residues: GMP reductase (349 aa).

Residue 108–131 participates in NADP(+) binding; sequence IDFLKIKKIFLLSSELKYICIDVA. 2 residues coordinate K(+): Gly-181 and Gly-183. Cys-186 serves as the catalytic Thioimidate intermediate. 216 to 239 is an NADP(+) binding site; that stretch reads IISDGGCTVSGDIAKAFGGGADFV.

The protein belongs to the IMPDH/GMPR family. GuaC type 1 subfamily. In terms of assembly, homotetramer.

It carries out the reaction IMP + NH4(+) + NADP(+) = GMP + NADPH + 2 H(+). Its function is as follows. Catalyzes the irreversible NADPH-dependent deamination of GMP to IMP. It functions in the conversion of nucleobase, nucleoside and nucleotide derivatives of G to A nucleotides, and in maintaining the intracellular balance of A and G nucleotides. This chain is GMP reductase, found in Buchnera aphidicola subsp. Acyrthosiphon pisum (strain Tuc7).